Consider the following 123-residue polypeptide: Large ribosomal subunit protein bL12 (123 aa).

It belongs to the bacterial ribosomal protein bL12 family. In terms of assembly, homodimer. Part of the ribosomal stalk of the 50S ribosomal subunit. Forms a multimeric L10(L12)X complex, where L10 forms an elongated spine to which 2 to 4 L12 dimers bind in a sequential fashion. Binds GTP-bound translation factors.

In terms of biological role, forms part of the ribosomal stalk which helps the ribosome interact with GTP-bound translation factors. Is thus essential for accurate translation. The chain is Large ribosomal subunit protein bL12 from Clostridium acetobutylicum (strain ATCC 824 / DSM 792 / JCM 1419 / IAM 19013 / LMG 5710 / NBRC 13948 / NRRL B-527 / VKM B-1787 / 2291 / W).